Reading from the N-terminus, the 332-residue chain is Serine, glycine, tyrosine and glutamine-rich protein (332 aa).

Residues 1 to 17 (MMKTVLLLVVLVGVAYC) form the signal peptide. Residues 39–81 (SSSSSSSSSSGGGGSSGGGASGGGGGGGSSGGGGASGGGGGGS) are disordered. Over residues 48-81 (SGGGGSSGGGASGGGGGGGSSGGGGASGGGGGGS) the composition is skewed to gly residues.

As to expression, prismatic layer of shell (at protein level). Expressed primarily in the mantle with highest level in the mantle edge and lower level in the mantle pallium.

Its subcellular location is the secreted. This Margaritifera margaritifera (Freshwater pearl mussel) protein is Serine, glycine, tyrosine and glutamine-rich protein.